A 209-amino-acid chain; its full sequence is Probable transcriptional regulator ycf29 (209 aa).

The Response regulatory domain maps to 4–120 (NLMLVENDTV…ELVSLIKNLI (117 aa)). Asp53 is modified (4-aspartylphosphate). The region spanning 139–204 (PLFQLLYLTP…LLVKYSIKNN (66 aa)) is the HTH luxR-type domain.

The protein resides in the plastid. Its subcellular location is the chloroplast. The sequence is that of Probable transcriptional regulator ycf29 (ycf29) from Porphyra purpurea (Red seaweed).